Consider the following 276-residue polypeptide: 2,3,4,5-tetrahydropyridine-2,6-dicarboxylate N-succinyltransferase (276 aa).

Substrate contacts are provided by Arg-104 and Asp-141.

The protein belongs to the transferase hexapeptide repeat family. In terms of assembly, homotrimer.

The protein resides in the cytoplasm. It carries out the reaction (S)-2,3,4,5-tetrahydrodipicolinate + succinyl-CoA + H2O = (S)-2-succinylamino-6-oxoheptanedioate + CoA. Its pathway is amino-acid biosynthesis; L-lysine biosynthesis via DAP pathway; LL-2,6-diaminopimelate from (S)-tetrahydrodipicolinate (succinylase route): step 1/3. The protein is 2,3,4,5-tetrahydropyridine-2,6-dicarboxylate N-succinyltransferase of Pseudoalteromonas translucida (strain TAC 125).